Here is a 455-residue protein sequence, read N- to C-terminus: Bifunctional protein GlmU (455 aa).

A pyrophosphorylase region spans residues 1 to 226 (MALNVVILAA…AIEVEGANNR (226 aa)). UDP-N-acetyl-alpha-D-glucosamine-binding positions include 8-11 (LAAG), Lys22, Gln73, 78-79 (GT), 100-102 (YGD), Gly137, Glu151, Asn166, and Asn224. Asp102 lines the Mg(2+) pocket. A Mg(2+)-binding site is contributed by Asn224. Residues 227–247 (VQLAQLERAYQARAAEKLMLE) are linker. The N-acetyltransferase stretch occupies residues 248-455 (GANLRDPARL…WARPVKKPKS (208 aa)). UDP-N-acetyl-alpha-D-glucosamine-binding residues include Arg330 and Lys348. His360 serves as the catalytic Proton acceptor. UDP-N-acetyl-alpha-D-glucosamine-binding residues include Tyr363 and Asn374. Acetyl-CoA contacts are provided by residues Ala377, 383 to 384 (NY), Ser402, Ala420, and Arg437.

In the N-terminal section; belongs to the N-acetylglucosamine-1-phosphate uridyltransferase family. The protein in the C-terminal section; belongs to the transferase hexapeptide repeat family. In terms of assembly, homotrimer. Requires Mg(2+) as cofactor.

It localises to the cytoplasm. The catalysed reaction is alpha-D-glucosamine 1-phosphate + acetyl-CoA = N-acetyl-alpha-D-glucosamine 1-phosphate + CoA + H(+). The enzyme catalyses N-acetyl-alpha-D-glucosamine 1-phosphate + UTP + H(+) = UDP-N-acetyl-alpha-D-glucosamine + diphosphate. Its pathway is nucleotide-sugar biosynthesis; UDP-N-acetyl-alpha-D-glucosamine biosynthesis; N-acetyl-alpha-D-glucosamine 1-phosphate from alpha-D-glucosamine 6-phosphate (route II): step 2/2. It functions in the pathway nucleotide-sugar biosynthesis; UDP-N-acetyl-alpha-D-glucosamine biosynthesis; UDP-N-acetyl-alpha-D-glucosamine from N-acetyl-alpha-D-glucosamine 1-phosphate: step 1/1. It participates in bacterial outer membrane biogenesis; LPS lipid A biosynthesis. Its function is as follows. Catalyzes the last two sequential reactions in the de novo biosynthetic pathway for UDP-N-acetylglucosamine (UDP-GlcNAc). The C-terminal domain catalyzes the transfer of acetyl group from acetyl coenzyme A to glucosamine-1-phosphate (GlcN-1-P) to produce N-acetylglucosamine-1-phosphate (GlcNAc-1-P), which is converted into UDP-GlcNAc by the transfer of uridine 5-monophosphate (from uridine 5-triphosphate), a reaction catalyzed by the N-terminal domain. This chain is Bifunctional protein GlmU, found in Shewanella sediminis (strain HAW-EB3).